Consider the following 341-residue polypeptide: Anthranilate phosphoribosyltransferase (341 aa).

5-phospho-alpha-D-ribose 1-diphosphate contacts are provided by residues glycine 79, 82-83 (GD), threonine 87, 89-92 (NIST), 107-115 (KHGGRSVSS), and serine 119. Glycine 79 contributes to the anthranilate binding site. Residue serine 91 coordinates Mg(2+). Arginine 165 is an anthranilate binding site. Residues aspartate 224 and glutamate 225 each contribute to the Mg(2+) site.

It belongs to the anthranilate phosphoribosyltransferase family. Homodimer. Requires Mg(2+) as cofactor.

It catalyses the reaction N-(5-phospho-beta-D-ribosyl)anthranilate + diphosphate = 5-phospho-alpha-D-ribose 1-diphosphate + anthranilate. It functions in the pathway amino-acid biosynthesis; L-tryptophan biosynthesis; L-tryptophan from chorismate: step 2/5. In terms of biological role, catalyzes the transfer of the phosphoribosyl group of 5-phosphorylribose-1-pyrophosphate (PRPP) to anthranilate to yield N-(5'-phosphoribosyl)-anthranilate (PRA). The sequence is that of Anthranilate phosphoribosyltransferase from Ruminiclostridium cellulolyticum (strain ATCC 35319 / DSM 5812 / JCM 6584 / H10) (Clostridium cellulolyticum).